The primary structure comprises 643 residues: 1-deoxy-D-xylulose-5-phosphate synthase (643 aa).

Residues His78 and 119 to 121 each bind thiamine diphosphate; that span reads AHS. Asp150 lines the Mg(2+) pocket. Thiamine diphosphate is bound by residues 151–152, Asn179, Tyr288, and Glu370; that span reads GS. Mg(2+) is bound at residue Asn179.

This sequence belongs to the transketolase family. DXPS subfamily. In terms of assembly, homodimer. Requires Mg(2+) as cofactor. It depends on thiamine diphosphate as a cofactor.

The catalysed reaction is D-glyceraldehyde 3-phosphate + pyruvate + H(+) = 1-deoxy-D-xylulose 5-phosphate + CO2. It functions in the pathway metabolic intermediate biosynthesis; 1-deoxy-D-xylulose 5-phosphate biosynthesis; 1-deoxy-D-xylulose 5-phosphate from D-glyceraldehyde 3-phosphate and pyruvate: step 1/1. Catalyzes the acyloin condensation reaction between C atoms 2 and 3 of pyruvate and glyceraldehyde 3-phosphate to yield 1-deoxy-D-xylulose-5-phosphate (DXP). The protein is 1-deoxy-D-xylulose-5-phosphate synthase of Brucella melitensis biotype 2 (strain ATCC 23457).